Here is a 492-residue protein sequence, read N- to C-terminus: Bifunctional purine biosynthesis protein PurH (492 aa).

Residues M1–V144 enclose the MGS-like domain.

It belongs to the PurH family.

It catalyses the reaction (6R)-10-formyltetrahydrofolate + 5-amino-1-(5-phospho-beta-D-ribosyl)imidazole-4-carboxamide = 5-formamido-1-(5-phospho-D-ribosyl)imidazole-4-carboxamide + (6S)-5,6,7,8-tetrahydrofolate. The catalysed reaction is IMP + H2O = 5-formamido-1-(5-phospho-D-ribosyl)imidazole-4-carboxamide. It functions in the pathway purine metabolism; IMP biosynthesis via de novo pathway; 5-formamido-1-(5-phospho-D-ribosyl)imidazole-4-carboxamide from 5-amino-1-(5-phospho-D-ribosyl)imidazole-4-carboxamide (10-formyl THF route): step 1/1. It participates in purine metabolism; IMP biosynthesis via de novo pathway; IMP from 5-formamido-1-(5-phospho-D-ribosyl)imidazole-4-carboxamide: step 1/1. The polypeptide is Bifunctional purine biosynthesis protein PurH (Macrococcus caseolyticus (strain JCSC5402) (Macrococcoides caseolyticum)).